Consider the following 1323-residue polypeptide: MDPDIENERIEDRKKWGHKDVEHWRAVSNVHYYTREGFYGTAILVCDGRLATVQDVPLAILKGVCLVLLGKIPEAIRHLEAFSNDQNFSLGALYALKWAHASAFNPDSKSIVEIEAEISKTARNEKTPYTSYASAAEVLYFAGEFQKAKQNLDIAGKRSTEKHAKYYCLMGWIDLGLGKKQKSTQELFEKAGGQEYPDGNIGRCKILEGHHSASEMRVAANELAISTIHFLPGHIEKAKALIMLRDWHGVMDCIVNADQQEGSNPYIEILRTTHGICFAGEVSQLNRTLQLLLKSLDDNESINHALYAKITKLIVSISGKNEKILRHARDFLIRALKLSRKPDYVALSLRIAFGLGDAREVSVLSQELIALDCEDPYAILSSVTSMLMVSRVSDARAQFDIMPAAHPKLLESPFYYLIASVLAKHSKDKSFENFRQHIENLIEMLRNQLQSFPFGIDYLLLFSSDLLYFAIEQCFDFYPLVPMKAPDDTMKLTSKMLQMIYDVAPGLAYCALQLARNCYLVSNTNAAEKWIYKALEKDDSLADAHILRAQLILDRGGKIQDADDALVTGLNFNFKLRETSLYHLIKSKTFKKRNENDEALKTLKMALQIPKKEMSNNLFVPKESADTHKISVQLELIDTLRQTKRIQDAEDTMADAMAEWAGQPEQHQLVIAQAQLYLTKGHTEKALAILRKIQPGQSNFHLSRIRMAEIYLEEKKDKRMFAACYRELLKVEPTPGSYSLLGDAFMKVQEPEDAINFYEQALKMQSKDVQLAEKIGEAYVMAHLYSKAVNFYESSMNIYKDKNMRLKLANLLLRLKNYEKCEKILRAPLDREPEPSDTETIQTHIQFLLLLAECHEMVENIPEAMKDFEKAKSLHNKIQDKTNTTGLRKEGARICNLQAELYYRRHEFPPAIEVCKQALQFYETDLKSNLLLSRIYKDENKWTLVLQPCQAVLQVDPHNDEANLILADFYYIKSEADHAMTSYITLLNKNPLHWHALFRVVELYCRKGEHHKADEFLNSARDANPRCVTEAGYSVCRGRFEWYTGDQSQALRCYSRAKDSPNVVWREKALYAIIDICLNPENEKILDADSVENAEQKTTEEAADQQSTAQVYLDLLGKVGPTERYRLAQNFVRMHTTDKNTIMATIDEFNKMAYAADKSIISVAAIYGIAKGYWLLKKQQPAKQLLKSLHGRVWNFDDAEYLEKCWLLMAEIYVGASKWEQAGTYLDQVLKYNCNSLRAFELYGQAKEKEQKYVEASKIYEKAFNTTNQKSCSFGYKLAFTLLKTRRLFLCIETCQKVLDINPQYPKIQREIMDKARGMIRTT.

17 TPR repeats span residues 56–89, 411–444, 580–613, 667–700, 702–735, 736–768, 770–802, 804–835, 845–878, 892–925, 927–959, 961–993, 995–1027, 1031–1064, 1203–1236, 1238–1270, and 1272–1305; these read VPLAILKGVCLVLLGKIPEAIRHLEAFSNDQNFS, ESPFYYLIASVLAKHSKDKSFENFRQHIENLIEM, SLYHLIKSKTFKKRNENDEALKTLKMALQIPKKE, HQLVIAQAQLYLTKGHTEKALAILRKIQPGQSNF, LSRIRMAEIYLEEKKDKRMFAACYRELLKVEPTP, GSYSLLGDAFMKVQEPEDAINFYEQALKMQSKD, QLAEKIGEAYVMAHLYSKAVNFYESSMNIYKDK, MRLKLANLLLRLKNYEKCEKILRAPLDREPEP, IQFLLLLAECHEMVENIPEAMKDFEKAKSLHNKI, ARICNLQAELYYRRHEFPPAIEVCKQALQFYETD, KSNLLLSRIYKDENKWTLVLQPCQAVLQVDPHN, EANLILADFYYIKSEADHAMTSYITLLNKNPLH, HALFRVVELYCRKGEHHKADEFLNSARDANPRC, AGYSVCRGRFEWYTGDQSQALRCYSRAKDSPNVV, EKCWLLMAEIYVGASKWEQAGTYLDQVLKYNCNS, RAFELYGQAKEKEQKYVEASKIYEKAFNTTNQK, and CSFGYKLAFTLLKTRRLFLCIETCQKVLDINPQY.

It belongs to the TTC21 family.

The sequence is that of Tetratricopeptide repeat protein 21 homolog from Caenorhabditis briggsae.